The sequence spans 52 residues: Protein RepA (52 aa).

Residues 20 to 40 constitute a DNA-binding region (H-T-H motif); sequence KLEELAQKYGMTKSGLVNFLV.

Belongs to the transcriptional regulatory CopG/NikR family. In terms of assembly, homodimer.

Regulates the plasmid copy number. RepA binds to the repAB promoter thus controlling the synthesis of the plasmid replication initiator protein RepB. The protein is Protein RepA (repA) of Lactiplantibacillus plantarum (Lactobacillus plantarum).